The primary structure comprises 471 residues: Probable ribonuclease FAU-1 (471 aa).

The protein belongs to the FAU-1 family.

Its function is as follows. Probable RNase involved in rRNA stability through maturation and/or degradation of precursor rRNAs. Binds to RNA in loop regions with AU-rich sequences. This Aeropyrum pernix (strain ATCC 700893 / DSM 11879 / JCM 9820 / NBRC 100138 / K1) protein is Probable ribonuclease FAU-1.